The sequence spans 121 residues: Small ribosomal subunit protein uS13 (121 aa).

The tract at residues 90 to 121 (RHRHGLPVRGQHTKNNARTRKGKAVAIAGKKK) is disordered.

Belongs to the universal ribosomal protein uS13 family. As to quaternary structure, part of the 30S ribosomal subunit. Forms a loose heterodimer with protein S19. Forms two bridges to the 50S subunit in the 70S ribosome.

Located at the top of the head of the 30S subunit, it contacts several helices of the 16S rRNA. In the 70S ribosome it contacts the 23S rRNA (bridge B1a) and protein L5 of the 50S subunit (bridge B1b), connecting the 2 subunits; these bridges are implicated in subunit movement. Contacts the tRNAs in the A and P-sites. This Limosilactobacillus fermentum (strain NBRC 3956 / LMG 18251) (Lactobacillus fermentum) protein is Small ribosomal subunit protein uS13.